We begin with the raw amino-acid sequence, 484 residues long: Glutamate--tRNA ligase (484 aa).

The short motif at 11–21 (PSPTGYLHIGN) is the 'HIGH' region element. Positions 252–256 (KLSKR) match the 'KMSKS' region motif. Lys255 contributes to the ATP binding site.

The protein belongs to the class-I aminoacyl-tRNA synthetase family. Glutamate--tRNA ligase type 1 subfamily. As to quaternary structure, monomer.

It localises to the cytoplasm. It carries out the reaction tRNA(Glu) + L-glutamate + ATP = L-glutamyl-tRNA(Glu) + AMP + diphosphate. In terms of biological role, catalyzes the attachment of glutamate to tRNA(Glu) in a two-step reaction: glutamate is first activated by ATP to form Glu-AMP and then transferred to the acceptor end of tRNA(Glu). In Staphylococcus epidermidis (strain ATCC 35984 / DSM 28319 / BCRC 17069 / CCUG 31568 / BM 3577 / RP62A), this protein is Glutamate--tRNA ligase.